A 444-amino-acid chain; its full sequence is MAERKYFGTDGVRGKVGQFPITPDFALKLGWAAGKILATQGTKQVLIGKDTRISGYMLESALEAGLAAAGLSAAFVGPMPTPAIAYLTRTFRAEAGIVISASHNPYYDNGIKFFSSVGEKLPDEVEEAIEALLDQPMDCVESAQLGKAMRINDAAGRYIEFCKGTFPANASLKGYKIVVDCANGATYHIAPNVMRELGAEVIEIGTKPDGLNINEKCGATDIKALQKVVVESGADVGLAYDGDGDRIMMVDHLGNKVDGDQILFIIAREALRSGKLHGGVVGTLMSNMGLEVALKHLAIPFTRANVGDRYVLEQLKEKGWKLGGENSGHIIVLDKNTTGDGIIASLEVLAAMEAHKMSLNDLARAVPLFPQVLINVRFEGGKNPLESDAVKAVAADVEKRLAGKGRILLRKSGTEPLIRVMVECEDGALAQSCAEEIVEAVKSN.

The active-site Phosphoserine intermediate is serine 102. Mg(2+) is bound by residues serine 102, aspartate 241, aspartate 243, and aspartate 245. The residue at position 102 (serine 102) is a Phosphoserine.

It belongs to the phosphohexose mutase family. Requires Mg(2+) as cofactor. Post-translationally, activated by phosphorylation.

It carries out the reaction alpha-D-glucosamine 1-phosphate = D-glucosamine 6-phosphate. Its function is as follows. Catalyzes the conversion of glucosamine-6-phosphate to glucosamine-1-phosphate. This Actinobacillus pleuropneumoniae serotype 5b (strain L20) protein is Phosphoglucosamine mutase.